A 226-amino-acid polypeptide reads, in one-letter code: Lipoprotein-releasing system ATP-binding protein LolD (226 aa).

Residues 5 to 226 (LKATNINKIY…LLRNGHWENY (222 aa)) enclose the ABC transporter domain. Residue 41 to 48 (GTSGSGKS) participates in ATP binding.

Belongs to the ABC transporter superfamily. Lipoprotein translocase (TC 3.A.1.125) family. The complex is composed of two ATP-binding proteins (LolD) and two transmembrane proteins (LolC and LolE).

It localises to the cell inner membrane. In terms of biological role, part of the ABC transporter complex LolCDE involved in the translocation of mature outer membrane-directed lipoproteins, from the inner membrane to the periplasmic chaperone, LolA. Responsible for the formation of the LolA-lipoprotein complex in an ATP-dependent manner. The sequence is that of Lipoprotein-releasing system ATP-binding protein LolD from Psychrobacter cryohalolentis (strain ATCC BAA-1226 / DSM 17306 / VKM B-2378 / K5).